We begin with the raw amino-acid sequence, 96 residues long: C-C motif chemokine 20 (96 aa).

Residues 1 to 26 (MMCSSKNLLLAALMSVLLLHFCSKSE) form the signal peptide. Disulfide bonds link Cys-32-Cys-58 and Cys-33-Cys-74.

This sequence belongs to the intercrine beta (chemokine CC) family.

Its subcellular location is the secreted. In terms of biological role, acts as a ligand for C-C chemokine receptor CCR6. Signals through binding and activation of CCR6 and induces a strong chemotactic response and mobilization of intracellular calcium ions. The ligand-receptor pair CCL20-CCR6 is responsible for the chemotaxis of dendritic cells (DC), effector/memory T-cells and B-cells and plays an important role at skin and mucosal surfaces under homeostatic and inflammatory conditions, as well as in pathology, including cancer and autoimmune diseases. CCL20 acts as a chemotactic factor that attracts lymphocytes and, slightly, neutrophils, but not monocytes. Involved in the recruitment of both the pro-inflammatory IL17 producing helper T-cells (Th17) and the regulatory T-cells (Treg) to sites of inflammation. Required for optimal migration of thymic natural regulatory T cells (nTregs) and DN1 early thymocyte progenitor cells. Positively regulates sperm motility and chemotaxis via its binding to CCR6 which triggers Ca2+ mobilization in the sperm which is important for its motility. May be involved in formation and function of the mucosal lymphoid tissues by attracting lymphocytes and dendritic cells towards epithelial cells. The protein is C-C motif chemokine 20 (CCL20) of Bos taurus (Bovine).